A 170-amino-acid chain; its full sequence is MKTQMDGHSLGRWSLVLLLLGLVMPLAIVAQVLSYKEAVLHAIDGINQRSSDANLYRILDLDPSLTMDGDPDTPKPVSFTVKETVCPRRTQQSPEDCDFKKDGLVKRCVGTVTLNQARGSFDISCDKDNRRFALLGDFFRKAREKIGEEFKRIVQRIKDFLRNLVPRTES.

The signal sequence occupies residues Met1–Ala30. The propeptide at Gln31–Arg131 is cathelin-like domain (CLD). 2 cysteine pairs are disulfide-bonded: Cys86-Cys97 and Cys108-Cys125. The interval Phe150 to Arg162 is active core.

It belongs to the cathelicidin family. In terms of assembly, monomer, homodimer or homotrimer (in vitro). Oligomerizes as tetra- or hexamer in solution (in vitro). In terms of processing, proteolytically cleaved by proteinase PRTN3 into antibacterial peptide LL-37. Proteolytically cleaved by cathepsin CTSG and neutrophil elastase ELANE. Resistant to proteolytic degradation in solution, and when bound to both zwitterionic (mimicking mammalian membranes) and negatively charged membranes (mimicking bacterial membranes). Post-translationally, after secretion onto the skin surface, the CAMP gene product is processed by a serine protease-dependent mechanism into multiple novel antimicrobial peptides distinct from and shorter than cathelicidin LL-37. These peptides show enhanced antimicrobial action, acquiring the ability to kill skin pathogens such as S.aureus, E.coli and C.albicans. These peptides have lost the ability to stimulate CXCL8/IL8 release from keratinocytes. The peptides act synergistically, killing bacteria at lower concentrations when present together, and maintain activity at increased salt condition.

The protein localises to the secreted. It is found in the vesicle. In terms of biological role, antimicrobial protein that is an integral component of the innate immune system. Binds to bacterial lipopolysaccharides (LPS). Acts via neutrophil N-formyl peptide receptors to enhance the release of CXCL2. Postsecretory processing generates multiple cathelicidin antimicrobial peptides with various lengths which act as a topical antimicrobial defense in sweat on skin. The unprocessed precursor form, cathelicidin antimicrobial peptide, inhibits the growth of Gram-negative E.coli and E.aerogenes with efficiencies comparable to that of the mature peptide LL-37 (in vitro). Antimicrobial peptide that is an integral component of the innate immune system. Binds to bacterial lipopolysaccharides (LPS). Causes membrane permeabilization by forming transmembrane pores (in vitro). Causes lysis of E.coli. Exhibits antimicrobial activity against Gram-negative bacteria such as P.aeruginosa, S.typhimurium, E.aerogenes, E.coli and P.syringae, Gram-positive bacteria such as L.monocytogenes, S.epidermidis, S.pyogenes and S.aureus, as well as vancomycin-resistant enterococci (in vitro). Exhibits antimicrobial activity against methicillin-resistant S.aureus, P.mirabilis, and C.albicans in low-salt media, but not in media containing 100 mM NaCl (in vitro). Forms chiral supramolecular assemblies with quinolone signal (PQS) molecules of P.aeruginosa, which may lead to interference of bacterial quorum signaling and perturbance of bacterial biofilm formation. May form supramolecular fiber-like assemblies on bacterial membranes. Induces cytokine and chemokine producation as well as TNF/TNFA and CSF2/GMCSF production in normal human keratinocytes. Exhibits hemolytic activity against red blood cells. Its function is as follows. Exhibits antimicrobial activity against E.coli and B.megaterium (in vitro). The protein is Cathelicidin antimicrobial peptide of Pongo pygmaeus (Bornean orangutan).